An 84-amino-acid polypeptide reads, in one-letter code: U8-theraphotoxin-Hhn1c 3 (84 aa).

Positions 1–21 (MKVALIVCLVWVMAMMELVSC) are cleaved as a signal peptide. Disulfide bonds link Cys-23/Cys-35, Cys-29/Cys-44, Cys-34/Cys-67, Cys-54/Cys-75, and Cys-69/Cys-81.

Belongs to the AVIT (prokineticin) family. Expressed by the venom gland.

Its subcellular location is the secreted. The polypeptide is U8-theraphotoxin-Hhn1c 3 (Cyriopagopus hainanus (Chinese bird spider)).